We begin with the raw amino-acid sequence, 119 residues long: Beta-2-microglobulin (119 aa).

The signal sequence occupies residues 1–20; the sequence is MSRSVALAVLALLSLSGLEA. Residues 25–114 form the Ig-like C1-type domain; that stretch reads PKIQVYSRHP…VTLSGPRTVK (90 aa). A disulfide bridge links Cys-45 with Cys-100.

The protein belongs to the beta-2-microglobulin family. As to quaternary structure, heterodimer of an alpha chain and a beta chain. Beta-2-microglobulin is the beta-chain of major histocompatibility complex class I molecules.

The protein localises to the secreted. Component of the class I major histocompatibility complex (MHC). Involved in the presentation of peptide antigens to the immune system. The sequence is that of Beta-2-microglobulin (B2M) from Papio anubis (Olive baboon).